Consider the following 469-residue polypeptide: 1-aminocyclopropane-1-carboxylate synthase 8 (469 aa).

Glu-47 and Tyr-85 together coordinate substrate. Lys-272 carries the N6-(pyridoxal phosphate)lysine modification.

The protein belongs to the class-I pyridoxal-phosphate-dependent aminotransferase family. Homodimer and heterodimer. In vivo, the relevance of heterodimerization with other ACS enzymes is however unsure. Interacts with GRF3. Pyridoxal 5'-phosphate is required as a cofactor. Post-translationally, may be processed at its C-terminus. In terms of tissue distribution, expressed in roots. Expressed at low level in flowers and siliques.

The catalysed reaction is S-adenosyl-L-methionine = 1-aminocyclopropane-1-carboxylate + S-methyl-5'-thioadenosine + H(+). It functions in the pathway alkene biosynthesis; ethylene biosynthesis via S-adenosyl-L-methionine; ethylene from S-adenosyl-L-methionine: step 1/2. In terms of biological role, 1-aminocyclopropane-1-carboxylate synthase (ACS) enzymes catalyze the conversion of S-adenosyl-L-methionine (SAM) into 1-aminocyclopropane-1-carboxylate (ACC), a direct precursor of ethylene. This chain is 1-aminocyclopropane-1-carboxylate synthase 8 (ACS8), found in Arabidopsis thaliana (Mouse-ear cress).